Consider the following 147-residue polypeptide: Lysozyme C-1 (147 aa).

Residues 1 to 18 (MKALIILGFLFLSVAVQG) form the signal peptide. In terms of domain architecture, C-type lysozyme spans 19-147 (KVFERCELAR…VSSYVEGCTL (129 aa)). Cystine bridges form between cysteine 24/cysteine 145, cysteine 48/cysteine 133, cysteine 83/cysteine 99, and cysteine 95/cysteine 113. Residues glutamate 53 and aspartate 71 contribute to the active site.

The protein belongs to the glycosyl hydrolase 22 family. As to quaternary structure, monomer. Stomach-specific.

It catalyses the reaction Hydrolysis of (1-&gt;4)-beta-linkages between N-acetylmuramic acid and N-acetyl-D-glucosamine residues in a peptidoglycan and between N-acetyl-D-glucosamine residues in chitodextrins.. Lysozymes have primarily a bacteriolytic function; those in tissues and body fluids are associated with the monocyte-macrophage system and enhance the activity of immunoagents. In Bos taurus (Bovine), this protein is Lysozyme C-1 (LYZ1).